Reading from the N-terminus, the 129-residue chain is uncharacterized protein (129 aa).

Transmembrane regions (helical) follow at residues 35–55 and 98–118; these read IVDG…WKIP and ILLL…IILL.

The protein resides in the membrane. This is an uncharacterized protein from Saccharomyces cerevisiae (strain ATCC 204508 / S288c) (Baker's yeast).